The sequence spans 974 residues: UvrABC system protein A (974 aa).

34–41 contributes to the ATP binding site; it reads GLSGSGKS. ABC transporter domains are found at residues 331–610 and 630–959; these read WARS…TNSL and ISKT…QFLK. Position 663-670 (663-670) interacts with ATP; sequence GVSGGGKS. A C4-type zinc finger spans residues 762–788; it reads CEACQGDGVIKIEMHFLPDVYVTCDVC.

Belongs to the ABC transporter superfamily. UvrA family. As to quaternary structure, forms a heterotetramer with UvrB during the search for lesions.

Its subcellular location is the cytoplasm. In terms of biological role, the UvrABC repair system catalyzes the recognition and processing of DNA lesions. UvrA is an ATPase and a DNA-binding protein. A damage recognition complex composed of 2 UvrA and 2 UvrB subunits scans DNA for abnormalities. When the presence of a lesion has been verified by UvrB, the UvrA molecules dissociate. This chain is UvrABC system protein A, found in Brucella abortus (strain 2308).